A 263-amino-acid chain; its full sequence is MARRPLVMGNWKLNGSKAFTKELIEGLKAELHDVTGCDVAIAPPVMYLGTAEAALSGCGCSCGGKSVIQLGAQNVDINVKGAFTGDISSEMLKDFGAKYIIIGHSERRTYHKESDEFVAKKFGALKEAGLVPVLCIGESEAENEAGKTEEVCARQIDAVINALGVEAFNGAVIAYEPIWAIGTGKSATPAQAQAVHAFIRGHIAAKSQAVAEQVIIQYGGSVNDANAAELFTQPDIDGALVGGASLKAPAFAVIVKAAAAAKN.

10-12 (NWK) lines the substrate pocket. Catalysis depends on histidine 104, which acts as the Electrophile. Residue glutamate 176 is the Proton acceptor of the active site. Substrate contacts are provided by residues glycine 182, serine 221, and 242–243 (GG).

This sequence belongs to the triosephosphate isomerase family. As to quaternary structure, homodimer.

The protein localises to the cytoplasm. The enzyme catalyses D-glyceraldehyde 3-phosphate = dihydroxyacetone phosphate. It participates in carbohydrate biosynthesis; gluconeogenesis. Its pathway is carbohydrate degradation; glycolysis; D-glyceraldehyde 3-phosphate from glycerone phosphate: step 1/1. In terms of biological role, involved in the gluconeogenesis. Catalyzes stereospecifically the conversion of dihydroxyacetone phosphate (DHAP) to D-glyceraldehyde-3-phosphate (G3P). The sequence is that of Triosephosphate isomerase from Haemophilus influenzae (strain 86-028NP).